Consider the following 946-residue polypeptide: Protein TMA108 (946 aa).

Ser-2 is subject to N-acetylserine. A substrate-binding site is contributed by Met-293 to Asn-297. Position 330 (His-330) interacts with Zn(2+). Residue Glu-331 is the Proton acceptor of the active site. The Zn(2+) site is built by His-334 and Glu-353.

The protein belongs to the peptidase M1 family. In terms of assembly, associates with ribosomal complexes. Zn(2+) is required as a cofactor.

The protein localises to the cytoplasm. Putative zinc aminopeptidase which may be involved in ribosome biogenesis. In Saccharomyces cerevisiae (strain ATCC 204508 / S288c) (Baker's yeast), this protein is Protein TMA108 (TMA108).